The chain runs to 1361 residues: DNA-directed RNA polymerase subunit beta' (1361 aa).

Cysteine 69, cysteine 71, cysteine 84, and cysteine 87 together coordinate Zn(2+). Aspartate 460, aspartate 462, and aspartate 464 together coordinate Mg(2+). The Zn(2+) site is built by cysteine 808, cysteine 882, cysteine 889, and cysteine 892.

This sequence belongs to the RNA polymerase beta' chain family. As to quaternary structure, the RNAP catalytic core consists of 2 alpha, 1 beta, 1 beta' and 1 omega subunit. When a sigma factor is associated with the core the holoenzyme is formed, which can initiate transcription. It depends on Mg(2+) as a cofactor. Zn(2+) serves as cofactor.

The catalysed reaction is RNA(n) + a ribonucleoside 5'-triphosphate = RNA(n+1) + diphosphate. Functionally, DNA-dependent RNA polymerase catalyzes the transcription of DNA into RNA using the four ribonucleoside triphosphates as substrates. The chain is DNA-directed RNA polymerase subunit beta' from Rickettsia bellii (strain RML369-C).